A 156-amino-acid polypeptide reads, in one-letter code: Tripartite terminase subunit 2 (156 aa).

Residues 1–37 (MYESENASEHHPELEDVFSENTGDSNPSMGSSDSTRS) are disordered. Residues 19-37 (SENTGDSNPSMGSSDSTRS) are compositionally biased toward polar residues.

Belongs to the herpesviridae TRM2 protein family. As to quaternary structure, associates with TRM1 and TRM3 to form the tripartite terminase complex.

It is found in the host nucleus. Its function is as follows. Component of the molecular motor that translocates viral genomic DNA in empty capsid during DNA packaging. Forms a tripartite terminase complex together with TRM1 and TRM3 in the host cytoplasm. Once the complex reaches the host nucleus, it interacts with the capsid portal vertex. This portal forms a ring in which genomic DNA is translocated into the capsid. The protein is Tripartite terminase subunit 2 of Varicella-zoster virus (strain Dumas) (HHV-3).